The chain runs to 412 residues: Sexual development regulator umv3 (412 aa).

The segment at 1–197 (MSAQDDIDTG…PPLLSDLPRH (197 aa)) is disordered. 2 stretches are compositionally biased toward polar residues: residues 73-93 (RANT…SASS) and 149-170 (RQSA…PGST). Positions 171–181 (ENERVRMHDQR) are enriched in basic and acidic residues. A Velvet domain is found at 195 to 388 (PRHSTDNKTY…ARQGIQVPVR (194 aa)).

The protein belongs to the velvet family. VelC subfamily.

The protein localises to the nucleus. In terms of biological role, velvet-domain-containing protein not required for disease or sexual development on seedlings. The protein is Sexual development regulator umv3 of Mycosarcoma maydis (Corn smut fungus).